Here is a 158-residue protein sequence, read N- to C-terminus: Putative tyrosine-protein phosphatase OCA1 (158 aa).

In terms of domain architecture, Tyrosine-protein phosphatase spans 7-158; that stretch reads NYGMVEENFY…DEELVFGASY (152 aa). The active-site Phosphocysteine intermediate is Cys99.

This sequence belongs to the protein-tyrosine phosphatase family.

It is found in the cytoplasm. It catalyses the reaction O-phospho-L-tyrosyl-[protein] + H2O = L-tyrosyl-[protein] + phosphate. Functionally, putative tyrosine-protein phosphatase required for protection against superoxide stress. This Mycosarcoma maydis (Corn smut fungus) protein is Putative tyrosine-protein phosphatase OCA1 (OCA1).